A 228-amino-acid polypeptide reads, in one-letter code: Auxin-responsive protein IAA16 (228 aa).

The EAR-like (transcriptional repression) motif lies at 19 to 23 (LSLAL). Residues 28–39 (SSSGLQGNTSTA) are compositionally biased toward polar residues. Disordered regions lie at residues 28 to 57 (SSSG…PAAP) and 70 to 90 (NLAS…AAAA). The PB1 domain occupies 97–214 (ARFVKVNMDG…RVLRSSDLNA (118 aa)).

It belongs to the Aux/IAA family. As to quaternary structure, homodimers and heterodimers. In terms of tissue distribution, expressed in roots, flowers and seedlings.

It localises to the nucleus. Functionally, aux/IAA proteins are short-lived transcriptional factors that function as repressors of early auxin response genes at low auxin concentrations. The polypeptide is Auxin-responsive protein IAA16 (IAA16) (Oryza sativa subsp. japonica (Rice)).